Consider the following 299-residue polypeptide: 4-diphosphocytidyl-2-C-methyl-D-erythritol kinase (299 aa).

Lys-18 is an active-site residue. ATP is bound at residue 104-114; the sequence is PIASGIGGGSS. Asp-146 is a catalytic residue.

It belongs to the GHMP kinase family. IspE subfamily.

It carries out the reaction 4-CDP-2-C-methyl-D-erythritol + ATP = 4-CDP-2-C-methyl-D-erythritol 2-phosphate + ADP + H(+). Its pathway is isoprenoid biosynthesis; isopentenyl diphosphate biosynthesis via DXP pathway; isopentenyl diphosphate from 1-deoxy-D-xylulose 5-phosphate: step 3/6. Its function is as follows. Catalyzes the phosphorylation of the position 2 hydroxy group of 4-diphosphocytidyl-2C-methyl-D-erythritol. This is 4-diphosphocytidyl-2-C-methyl-D-erythritol kinase from Brucella abortus biovar 1 (strain 9-941).